Here is a 291-residue protein sequence, read N- to C-terminus: N-acetylmannosamine kinase (291 aa).

ATP is bound by residues 5 to 12 (AIDIGGTK) and 132 to 139 (GVGGGVVC). Zn(2+) is bound by residues His156, Cys166, Cys168, and Cys173.

Belongs to the ROK (NagC/XylR) family. NanK subfamily. Homodimer.

The enzyme catalyses an N-acyl-D-mannosamine + ATP = an N-acyl-D-mannosamine 6-phosphate + ADP + H(+). The protein operates within amino-sugar metabolism; N-acetylneuraminate degradation; D-fructose 6-phosphate from N-acetylneuraminate: step 2/5. In terms of biological role, catalyzes the phosphorylation of N-acetylmannosamine (ManNAc) to ManNAc-6-P. The protein is N-acetylmannosamine kinase of Salmonella heidelberg (strain SL476).